The chain runs to 472 residues: Chromosomal replication initiator protein DnaA (472 aa).

The segment at 1 to 73 (MSNMEQDRWS…LSCWQAELPE (73 aa)) is domain I, interacts with DnaA modulators. The domain II stretch occupies residues 73–128 (EVNRVDLTVRSPVRCATPAKEVPAPVESRRDEQRPSAERSNGATPVSANHDALGGS). The segment at 90–124 (PAKEVPAPVESRRDEQRPSAERSNGATPVSANHDA) is disordered. Basic and acidic residues predominate over residues 99 to 109 (ESRRDEQRPSA). Over residues 110–119 (ERSNGATPVS) the composition is skewed to polar residues. The segment at 129–351 (PLDPRLTFAS…GAINRLLAHS (223 aa)) is domain III, AAA+ region. ATP-binding residues include Gly-176, Gly-178, Lys-179, and Thr-180. A domain IV, binds dsDNA region spans residues 352 to 472 (KLNNQPVTLE…VESLKRQLQE (121 aa)).

Belongs to the DnaA family. As to quaternary structure, oligomerizes as a right-handed, spiral filament on DNA at oriC.

The protein localises to the cytoplasm. Its function is as follows. Plays an essential role in the initiation and regulation of chromosomal replication. ATP-DnaA binds to the origin of replication (oriC) to initiate formation of the DNA replication initiation complex once per cell cycle. Binds the DnaA box (a 9 base pair repeat at the origin) and separates the double-stranded (ds)DNA. Forms a right-handed helical filament on oriC DNA; dsDNA binds to the exterior of the filament while single-stranded (ss)DNA is stabiized in the filament's interior. The ATP-DnaA-oriC complex binds and stabilizes one strand of the AT-rich DNA unwinding element (DUE), permitting loading of DNA polymerase. After initiation quickly degrades to an ADP-DnaA complex that is not apt for DNA replication. Binds acidic phospholipids. The chain is Chromosomal replication initiator protein DnaA from Rhodopseudomonas palustris (strain ATCC BAA-98 / CGA009).